A 682-amino-acid polypeptide reads, in one-letter code: Probable xyloglucan glycosyltransferase 6 (682 aa).

2 consecutive transmembrane segments (helical) span residues 109–129 (LIKG…AAYF) and 173–193 (IVLF…CFWI). The active site involves D260. Residues D319 and D321 each coordinate substrate. D413 is an active-site residue. The next 2 membrane-spanning stretches (helical) occupy residues 491–511 (LILP…TMFF) and 516–536 (LPSW…IIPA). The residue at position 608 (S608) is a Phosphoserine. 2 helical membrane-spanning segments follow: residues 632–651 (LYRT…VRSL) and 657–677 (IHFY…LDLI).

This sequence belongs to the glycosyltransferase 2 family. Plant cellulose synthase-like C subfamily. In terms of assembly, homodimer. Mainly expressed in flowers and seeds, and, to a lower extent, in seedlings, roots, leaves and stems.

The protein localises to the golgi apparatus membrane. Probable beta-1,4-glucan synthase rather involved in the synthesis of the xyloglucan backbone than cellulose. Seems to work simultaneously with xyloglucan 6-xylosyltransferase. Xyloglucan is a noncellulosic polysaccharides of plant cell wall and consists of a glucan backbone substituted by xylose, galactose and fucose. The sequence is that of Probable xyloglucan glycosyltransferase 6 from Arabidopsis thaliana (Mouse-ear cress).